Consider the following 631-residue polypeptide: Phosphomethylpyrimidine synthase (631 aa).

Residues Asn239, Met268, Tyr297, His333, 353-355 (SRG), 394-397 (DGLR), and Glu433 each bind substrate. Zn(2+) is bound at residue His437. Residue Tyr460 participates in substrate binding. His501 is a binding site for Zn(2+). Residues Cys581, Cys584, and Cys589 each coordinate [4Fe-4S] cluster.

It belongs to the ThiC family. In terms of assembly, homodimer. [4Fe-4S] cluster is required as a cofactor.

The catalysed reaction is 5-amino-1-(5-phospho-beta-D-ribosyl)imidazole + S-adenosyl-L-methionine = 4-amino-2-methyl-5-(phosphooxymethyl)pyrimidine + CO + 5'-deoxyadenosine + formate + L-methionine + 3 H(+). It functions in the pathway cofactor biosynthesis; thiamine diphosphate biosynthesis. Functionally, catalyzes the synthesis of the hydroxymethylpyrimidine phosphate (HMP-P) moiety of thiamine from aminoimidazole ribotide (AIR) in a radical S-adenosyl-L-methionine (SAM)-dependent reaction. The chain is Phosphomethylpyrimidine synthase from Salmonella arizonae (strain ATCC BAA-731 / CDC346-86 / RSK2980).